The sequence spans 222 residues: Interleukin-12 subunit alpha (222 aa).

The N-terminal stretch at 1 to 25 (MCPPRGLLLVTILVLLSHLDHLTWA) is a signal peptide. Disulfide bonds link Cys-40/Cys-113, Cys-67/Cys-199, and Cys-88/Cys-126. N-linked (GlcNAc...) asparagine glycans are attached at residues Asn-42, Asn-96, and Asn-110.

This sequence belongs to the IL-6 superfamily. In terms of assembly, heterodimer with IL12B; disulfide-linked. This heterodimer is known as interleukin IL-12. Heterodimer with EBI3/IL27B; not disulfide-linked. This heterodimer is known as interleukin IL-35. Interacts with NBR1; this interaction promotes IL-12 secretion.

Its subcellular location is the secreted. Functionally, heterodimerizes with IL12B to form the IL-12 cytokine or with EBI3/IL27B to form the IL-35 cytokine. IL-12 is primarily produced by professional antigen-presenting cells (APCs) such as B-cells and dendritic cells (DCs) as well as macrophages and granulocytes and regulates T-cell and natural killer-cell responses, induces the production of interferon-gamma (IFN-gamma), favors the differentiation of T-helper 1 (Th1) cells and is an important link between innate resistance and adaptive immunity. Mechanistically, exerts its biological effects through a receptor composed of IL12R1 and IL12R2 subunits. Binding to the receptor results in the rapid tyrosine phosphorylation of a number of cellular substrates including the JAK family kinases TYK2 and JAK2. In turn, recruited STAT4 gets phosphorylated and translocates to the nucleus where it regulates cytokine/growth factor responsive genes. As part of IL-35, plays essential roles in maintaining the immune homeostasis of the liver microenvironment and also functions as an immune-suppressive cytokine. Mediates biological events through unconventional receptors composed of IL12RB2 and gp130/IL6ST heterodimers or homodimers. Signaling requires the transcription factors STAT1 and STAT4, which form a unique heterodimer that binds to distinct DNA sites. In Canis lupus familiaris (Dog), this protein is Interleukin-12 subunit alpha (IL12A).